Here is a 253-residue protein sequence, read N- to C-terminus: GTP cyclohydrolase 1 type 2 homolog (253 aa).

Residues histidine 64, histidine 65, aspartate 101, histidine 222, and glutamate 226 each contribute to the a divalent metal cation site.

It belongs to the GTP cyclohydrolase I type 2/NIF3 family. Homohexamer.

This chain is GTP cyclohydrolase 1 type 2 homolog, found in Halobacterium salinarum (strain ATCC 700922 / JCM 11081 / NRC-1) (Halobacterium halobium).